The primary structure comprises 127 residues: Large ribosomal subunit protein bL17 (127 aa).

The protein belongs to the bacterial ribosomal protein bL17 family. Part of the 50S ribosomal subunit. Contacts protein L32.

The chain is Large ribosomal subunit protein bL17 from Xanthomonas campestris pv. campestris (strain 8004).